The primary structure comprises 148 residues: MGRLHSHRHGKSHSIRPSSPKAPSWIQGPGEVEDLIVKYAKEGLAPSQIGSKLRDQHAIPLTRPITGKSVTQIMEEHGATPELPEDLNNIVQKAVGLQRHLRANKGDRRNVRSLELIEAKVHRLDVYYKRIGRIPKDWKYKSVVAQLE.

Residues 1–14 (MGRLHSHRHGKSHS) are compositionally biased toward basic residues. Positions 1–27 (MGRLHSHRHGKSHSIRPSSPKAPSWIQ) are disordered.

Belongs to the universal ribosomal protein uS15 family. In terms of assembly, part of the 30S ribosomal subunit.

The polypeptide is Small ribosomal subunit protein uS15 (Cenarchaeum symbiosum (strain A)).